The chain runs to 436 residues: MSIKWEKKDGTNEGKLTFEIAPEKIKEGLNSAFNRVKKSLNVPGFRKGKVPRQIFNKMYGEEALYQEALNDLLPEAYSNAVKEADINPVDQPQIDVESMESDAAWVLTAKVTVEPEVELGQYKDLEVTKHPTRVLKADIENELNRLQQQEAELVLKEDEPAEQGDTVVIDFEGKIDGEAFDGGKGENHSLELGSGQFIPGFEDQLVGHKAGEEVAVTVTFPEDYQAKDLAGKEAVFDTKIHEVKTKELPELDDEFAKDVDEDVATLEELKAKIKDRLKDQKVAEAKAAIQEEALDIAVENATIGEIPAVMIEDDVHRQMDNFLAGMQNQGISADMYYQLTGTSADDLHKQFEEGAEKRVKTNLVLEAIVKAEKIEPSEDEINAEIKSLAEQYQMDEAAVRSALSDDMLKHDIAVRKVVDEIADSAKQTRDAKKDEE.

In terms of domain architecture, PPIase FKBP-type spans 164-249 (GDTVVIDFEG…IHEVKTKELP (86 aa)).

Belongs to the FKBP-type PPIase family. Tig subfamily.

The protein localises to the cytoplasm. The enzyme catalyses [protein]-peptidylproline (omega=180) = [protein]-peptidylproline (omega=0). Involved in protein export. Acts as a chaperone by maintaining the newly synthesized protein in an open conformation. Functions as a peptidyl-prolyl cis-trans isomerase. The polypeptide is Trigger factor (Ligilactobacillus salivarius (strain UCC118) (Lactobacillus salivarius)).